Here is a 284-residue protein sequence, read N- to C-terminus: Release factor glutamine methyltransferase (284 aa).

S-adenosyl-L-methionine-binding positions include 125–129, glutamate 148, and asparagine 190; that span reads GVGSG. Residue 190 to 193 participates in substrate binding; that stretch reads NPPY.

The protein belongs to the protein N5-glutamine methyltransferase family. PrmC subfamily.

It carries out the reaction L-glutaminyl-[peptide chain release factor] + S-adenosyl-L-methionine = N(5)-methyl-L-glutaminyl-[peptide chain release factor] + S-adenosyl-L-homocysteine + H(+). Methylates the class 1 translation termination release factors RF1/PrfA and RF2/PrfB on the glutamine residue of the universally conserved GGQ motif. This Geobacter sulfurreducens (strain ATCC 51573 / DSM 12127 / PCA) protein is Release factor glutamine methyltransferase.